Reading from the N-terminus, the 393-residue chain is Methylthioribose kinase (393 aa).

Residues asparagine 38, lysine 53, and 107 to 109 contribute to the ATP site; that span reads EDL. Aspartate 225 is a binding site for substrate. 242–244 contributes to the ATP binding site; sequence DPE. Arginine 332 is a substrate binding site.

It belongs to the methylthioribose kinase family. Homodimer.

It catalyses the reaction 5-(methylsulfanyl)-D-ribose + ATP = 5-(methylsulfanyl)-alpha-D-ribose 1-phosphate + ADP + H(+). Its pathway is amino-acid biosynthesis; L-methionine biosynthesis via salvage pathway; S-methyl-5-thio-alpha-D-ribose 1-phosphate from S-methyl-5'-thioadenosine (hydrolase route): step 2/2. Catalyzes the phosphorylation of methylthioribose into methylthioribose-1-phosphate. The polypeptide is Methylthioribose kinase (Bacillus cereus (strain G9842)).